We begin with the raw amino-acid sequence, 800 residues long: Phenylalanine--tRNA ligase beta subunit (800 aa).

The tRNA-binding domain occupies 39–154; it reads TKEIKNLVVG…TEVKPGTDAL (116 aa). The B5 domain occupies 408–483; it reads CFVTPIDISV…RIYGYDKIPS (76 aa). Positions 461, 467, 470, and 471 each coordinate Mg(2+). The 93-residue stretch at 708 to 800 folds into the FDX-ACB domain; sequence PRFPGVSRDI…ALKSEGATIR (93 aa).

The protein belongs to the phenylalanyl-tRNA synthetase beta subunit family. Type 1 subfamily. As to quaternary structure, tetramer of two alpha and two beta subunits. The cofactor is Mg(2+).

The protein localises to the cytoplasm. It carries out the reaction tRNA(Phe) + L-phenylalanine + ATP = L-phenylalanyl-tRNA(Phe) + AMP + diphosphate + H(+). This chain is Phenylalanine--tRNA ligase beta subunit, found in Staphylococcus saprophyticus subsp. saprophyticus (strain ATCC 15305 / DSM 20229 / NCIMB 8711 / NCTC 7292 / S-41).